The sequence spans 1218 residues: ABC transporter NFT1 (1218 aa).

Residues Met-1–Pro-29 are Extracellular-facing. Residue Asn-4 is glycosylated (N-linked (GlcNAc...) asparagine). Residues Leu-30–Leu-50 form a helical membrane-spanning segment. Residues Arg-51–Lys-103 lie on the Cytoplasmic side of the membrane. Residues Phe-104–Met-124 traverse the membrane as a helical segment. Over Pro-125–Lys-130 the chain is Extracellular. The chain crosses the membrane as a helical span at residues Phe-131–Thr-151. Residues Leu-152–Arg-169 lie on the Cytoplasmic side of the membrane. The chain crosses the membrane as a helical span at residues Asp-170–Leu-190. Topologically, residues Arg-191–Lys-201 are extracellular. A helical membrane pass occupies residues Ile-202–Ser-222. Topologically, residues Thr-223–Asn-302 are cytoplasmic. A helical membrane pass occupies residues Ile-303 to Phe-323. Positions Phe-311–Gln-621 constitute an ABC transmembrane type-1 1 domain. At Leu-324–Ser-351 the chain is on the extracellular side. The chain crosses the membrane as a helical span at residues Leu-352–Leu-374. Residues Gly-375 to Ser-449 lie on the Cytoplasmic side of the membrane. Positions Asn-410–Asp-434 are disordered. The span at Ala-424–Asp-434 shows a compositional bias: basic and acidic residues. The chain crosses the membrane as a helical span at residues Glu-450–Met-470. At Ile-471–Phe-481 the chain is on the extracellular side. The chain crosses the membrane as a helical span at residues Ala-482–Tyr-504. At Gln-505 to Thr-558 the chain is on the cytoplasmic side. Residues Ile-559–Phe-579 traverse the membrane as a helical segment. At Ser-580–Lys-584 the chain is on the extracellular side. A helical transmembrane segment spans residues Phe-585–Leu-605. The Cytoplasmic portion of the chain corresponds to Arg-606–Asp-953. In terms of domain architecture, ABC transporter spans Phe-651–Asn-892. ATP is bound at residue Gly-686 to Ser-693. Positions Asn-892–Gln-901 are enriched in polar residues. Residues Asn-892–Glu-926 are disordered. The chain crosses the membrane as a helical span at residues Tyr-954 to Ile-974. The 258-residue stretch at Val-961–Ser-1218 folds into the ABC transmembrane type-1 2 domain. Residues Thr-975–Thr-1013 lie on the Extracellular side of the membrane. A helical membrane pass occupies residues Tyr-1014–Ile-1034. The Cytoplasmic portion of the chain corresponds to Ser-1035–Leu-1082. The chain crosses the membrane as a helical span at residues Ile-1083–Tyr-1105. Topologically, residues Val-1106–Gln-1109 are extracellular. Residues Phe-1110–Ser-1132 traverse the membrane as a helical segment. Topologically, residues Arg-1133–Arg-1197 are cytoplasmic. A helical transmembrane segment spans residues Val-1198–Ser-1218.

It belongs to the ABC transporter superfamily. ABCC family. Conjugate transporter (TC 3.A.1.208) subfamily.

It is found in the membrane. In Saccharomyces cerevisiae (strain ATCC 204508 / S288c) (Baker's yeast), this protein is ABC transporter NFT1 (NFT1).